A 339-amino-acid chain; its full sequence is Cyclin-Y-like protein 1-A (339 aa).

Positions 1–13 (MGNTVTCCVSPDS) are enriched in polar residues. Positions 1 to 42 (MGNTVTCCVSPDSSPKEGRDREVTESGEPYQAQGEPQDGDVQ) are disordered. Residues 14–24 (SPKEGRDREVT) are compositionally biased toward basic and acidic residues. A Cyclin N-terminal domain is found at 141-263 (DIFDEKLHPI…FLELLQFNIN (123 aa)).

The protein belongs to the cyclin family. Cyclin Y subfamily.

The protein is Cyclin-Y-like protein 1-A (ccnyl1-a) of Xenopus laevis (African clawed frog).